The primary structure comprises 340 residues: GTP 3',8-cyclase (340 aa).

Residues Lys8–Asp227 enclose the Radical SAM core domain. Arg17 serves as a coordination point for GTP. [4Fe-4S] cluster is bound by residues Cys24 and Cys28. Tyr30 lines the S-adenosyl-L-methionine pocket. Cys31 is a binding site for [4Fe-4S] cluster. Arg71 is a GTP binding site. S-adenosyl-L-methionine is bound at residue Gly75. Residue Thr102 participates in GTP binding. Position 126 (Ser126) interacts with S-adenosyl-L-methionine. Position 163 (Lys163) interacts with GTP. S-adenosyl-L-methionine is bound at residue Met197. Residues Cys261 and Cys264 each coordinate [4Fe-4S] cluster. Position 266–268 (Arg266–Arg268) interacts with GTP. Cys278 is a binding site for [4Fe-4S] cluster.

The protein belongs to the radical SAM superfamily. MoaA family. In terms of assembly, monomer and homodimer. The cofactor is [4Fe-4S] cluster.

It catalyses the reaction GTP + AH2 + S-adenosyl-L-methionine = (8S)-3',8-cyclo-7,8-dihydroguanosine 5'-triphosphate + 5'-deoxyadenosine + L-methionine + A + H(+). It functions in the pathway cofactor biosynthesis; molybdopterin biosynthesis. Catalyzes the cyclization of GTP to (8S)-3',8-cyclo-7,8-dihydroguanosine 5'-triphosphate. This chain is GTP 3',8-cyclase, found in Staphylococcus aureus (strain USA300).